Consider the following 34-residue polypeptide: U2-theraphotoxin-Bs1a (34 aa).

Disulfide bonds link Cys2/Cys16, Cys9/Cys21, and Cys15/Cys28.

Expressed by the venom gland.

It is found in the secreted. The chain is U2-theraphotoxin-Bs1a from Brachypelma smithi (Mexican red knee tarantula).